Reading from the N-terminus, the 160-residue chain is Cyclic pyranopterin monophosphate synthase (160 aa).

Residues 75 to 77 and 113 to 114 each bind substrate; these read LCH and ME. Aspartate 128 is an active-site residue.

This sequence belongs to the MoaC family. Homohexamer; trimer of dimers.

The enzyme catalyses (8S)-3',8-cyclo-7,8-dihydroguanosine 5'-triphosphate = cyclic pyranopterin phosphate + diphosphate. It participates in cofactor biosynthesis; molybdopterin biosynthesis. Catalyzes the conversion of (8S)-3',8-cyclo-7,8-dihydroguanosine 5'-triphosphate to cyclic pyranopterin monophosphate (cPMP). This Beijerinckia indica subsp. indica (strain ATCC 9039 / DSM 1715 / NCIMB 8712) protein is Cyclic pyranopterin monophosphate synthase.